Here is a 775-residue protein sequence, read N- to C-terminus: MASLIYRQLLTNSYSVELSDEINTIGSEKTQNVTINPGPFAQTNYAPVVLESWEVNDSTTIEPVLDGPYQPTSFKPPSDYWILLNPTDQQVVLEGTNKTDIWIALLLVEPNVTNQSRQYTLFGETKQITVENNTNKWKFFEMFRKNVSAEFQHKRTLTSDTKLAGFLKHYNSVWTFHGETPHATTDYSSTSNLSEVETVIHVEFYIIPRSQESKCVEYINTGLPPMQNTRNIVPVALSSRSVTYQRAQVNEDIIISKTSLWKEMQCNRDIIIRFKFNNSIVKLGGLGYKWSEISFKAANYQYNYLRDGEQVTAHTTCSVNGVNNFSYNGGSLPTDFSVSRYEVIKENSYVYVDYWDDSQAFRNMVYVRSLAANLNSVKCSGGNYNFQLPVGAWPVMSGGAVSLHFAGVTLSTQFTDFVSLNSLRFRFSLTVEEPPFSILRTRVSGLYGLPAFNPNSGHEYYEIAGRFSLISLVPSNDDYQTPIMNSVTVRQDLERQLGDLREEFNSLSQEIAMTQLIDLALLPLDMFSMFSGIKSTIDAAKSMATKVMKKFKRSGLATSISELTGSLSNAASSISRSSSIRSNISSISVWTDVSEQIAGSSDSVSNISTQMSAISRRLRLREITTQTEGMNFDDISAAVLKTKIDRSTHISPDTLPDIMTESSKKFIPKRAYRVLKDDEVMEADVDGKFFAYKVDTFEEVPFDVDKFVDLVTDSPVISAIIDFKTLKNLNDNYGITRSQALDLIRSDPRVLRDFINQNNPIIKNRIEQLILQCRL.

The interval 65–223 (LDGPYQPTSF…KCVEYINTGL (159 aa)) is spike head. The segment at 247–478 (AQVNEDIIIS…LISLVPSNDD (232 aa)) is spike body and stalk (antigen domain). The DGE motif; interaction with ITGA2/ITGB1 heterodimer motif lies at 307–309 (DGE). A disulfide bridge links Cys317 with Cys379. Residues 388–408 (LPVGAWPVMSGGAVSLHFAGV) form a hydrophobic; possible role in virus entry into host cell region. Positions 447–449 (YGL) match the YGL motif; interaction with ITGA4 motif. Positions 483–515 (IMNSVTVRQDLERQLGDLREEFNSLSQEIAMTQ) form a coiled coil. The interval 509–775 (QEIAMTQLID…IEQLILQCRL (267 aa)) is spike foot. The short motif at 643–645 (KID) is the KID motif; interaction with HSPA8 element.

It belongs to the rotavirus VP4 family. Homotrimer. VP4 adopts a dimeric appearance above the capsid surface, while forming a trimeric base anchored inside the capsid layer. Only hints of the third molecule are observed above the capsid surface. It probably performs a series of molecular rearrangements during viral entry. Prior to trypsin cleavage, it is flexible. The priming trypsin cleavage triggers its rearrangement into rigid spikes with approximate two-fold symmetry of their protruding parts. After an unknown second triggering event, cleaved VP4 may undergo another rearrangement, in which two VP5* subunits fold back on themselves and join a third subunit to form a tightly associated trimer, shaped like a folded umbrella. Interacts with VP6. Interacts with VP7. As to quaternary structure, homotrimer. The trimer is coiled-coil stabilized by its C-terminus, however, its N-terminus, known as antigen domain or 'body', seems to be flexible allowing it to self-associate either as a dimer or a trimer. In terms of processing, proteolytic cleavage by trypsin results in activation of VP4 functions and greatly increases infectivity. The penetration into the host cell is dependent on trypsin treatment of VP4. It produces two peptides, VP5* and VP8* that remain associated with the virion. Cleavage of VP4 by trypsin probably occurs in vivo in the lumen of the intestine prior to infection of enterocytes. Trypsin seems to be incorporated into the three-layered viral particles but remains inactive as long as the viral outer capsid is intact and would only be activated upon the solubilization of the latter.

The protein resides in the virion. It localises to the host rough endoplasmic reticulum. Its subcellular location is the host cell membrane. The protein localises to the host cytoplasm. It is found in the host cytoskeleton. The protein resides in the host endoplasmic reticulum-Golgi intermediate compartment. Its function is as follows. Spike-forming protein that mediates virion attachment to the host epithelial cell receptors and plays a major role in cell penetration, determination of host range restriction and virulence. Rotavirus attachment and entry into the host cell probably involves multiple sequential contacts between the outer capsid proteins VP4 and VP7, and the cell receptors. It is subsequently lost, together with VP7, following virus entry into the host cell. Following entry into the host cell, low intracellular or intravesicular Ca(2+) concentration probably causes the calcium-stabilized VP7 trimers to dissociate from the virion. This step is probably necessary for the membrane-disrupting entry step and the release of VP4, which is locked onto the virion by VP7. During the virus exit from the host cell, VP4 seems to be required to target the newly formed virions to the host cell lipid rafts. Functionally, forms the spike 'foot' and 'body' and acts as a membrane permeabilization protein that mediates release of viral particles from endosomal compartments into the cytoplasm. During entry, the part of VP5* that protrudes from the virus folds back on itself and reorganizes from a local dimer to a trimer. This reorganization may be linked to membrane penetration by exposing VP5* hydrophobic region. In integrin-dependent strains, VP5* targets the integrin heterodimer ITGA2/ITGB1 for cell attachment. In terms of biological role, forms the head of the spikes and mediates the recognition of specific host cell surface glycans. It is the viral hemagglutinin and an important target of neutralizing antibodies. In sialic acid-dependent strains, VP8* binds to host cell sialic acid, most probably a ganglioside, providing the initial contact. In some other strains, VP8* mediates the attachment to histo-blood group antigens (HBGAs) for viral entry. The protein is Outer capsid protein VP4 of Rotavirus A (strain RVA/Human/Venezuela/M37/1982/G1P2A[6]) (RV-A).